The chain runs to 520 residues: Glutamate--cysteine ligase (520 aa).

The protein belongs to the glutamate--cysteine ligase type 1 family. Type 1 subfamily.

It catalyses the reaction L-cysteine + L-glutamate + ATP = gamma-L-glutamyl-L-cysteine + ADP + phosphate + H(+). It functions in the pathway sulfur metabolism; glutathione biosynthesis; glutathione from L-cysteine and L-glutamate: step 1/2. The sequence is that of Glutamate--cysteine ligase from Sodalis glossinidius (strain morsitans).